A 460-amino-acid chain; its full sequence is Bifunctional protein GlmU (460 aa).

The segment at 1–235 (MALSAAIILA…PLSVEGVNDR (235 aa)) is pyrophosphorylase. UDP-N-acetyl-alpha-D-glucosamine is bound by residues 9–12 (LAAG), K23, Q76, and 81–82 (GT). D109 serves as a coordination point for Mg(2+). Residues G146, E161, N176, and N233 each coordinate UDP-N-acetyl-alpha-D-glucosamine. N233 contacts Mg(2+). The tract at residues 236 to 256 (VQLAALAKAHNKRVCEHWMRE) is linker. The interval 257–460 (GVTILDPDTT…VEGWKPEWER (204 aa)) is N-acetyltransferase. The UDP-N-acetyl-alpha-D-glucosamine site is built by R338 and K356. The active-site Proton acceptor is H368. 2 residues coordinate UDP-N-acetyl-alpha-D-glucosamine: Y371 and N382. Acetyl-CoA-binding positions include 391 to 392 (NY) and A428.

It in the N-terminal section; belongs to the N-acetylglucosamine-1-phosphate uridyltransferase family. The protein in the C-terminal section; belongs to the transferase hexapeptide repeat family. As to quaternary structure, homotrimer. The cofactor is Mg(2+).

It is found in the cytoplasm. It carries out the reaction alpha-D-glucosamine 1-phosphate + acetyl-CoA = N-acetyl-alpha-D-glucosamine 1-phosphate + CoA + H(+). The catalysed reaction is N-acetyl-alpha-D-glucosamine 1-phosphate + UTP + H(+) = UDP-N-acetyl-alpha-D-glucosamine + diphosphate. The protein operates within nucleotide-sugar biosynthesis; UDP-N-acetyl-alpha-D-glucosamine biosynthesis; N-acetyl-alpha-D-glucosamine 1-phosphate from alpha-D-glucosamine 6-phosphate (route II): step 2/2. It participates in nucleotide-sugar biosynthesis; UDP-N-acetyl-alpha-D-glucosamine biosynthesis; UDP-N-acetyl-alpha-D-glucosamine from N-acetyl-alpha-D-glucosamine 1-phosphate: step 1/1. Its pathway is bacterial outer membrane biogenesis; LPS lipid A biosynthesis. Functionally, catalyzes the last two sequential reactions in the de novo biosynthetic pathway for UDP-N-acetylglucosamine (UDP-GlcNAc). The C-terminal domain catalyzes the transfer of acetyl group from acetyl coenzyme A to glucosamine-1-phosphate (GlcN-1-P) to produce N-acetylglucosamine-1-phosphate (GlcNAc-1-P), which is converted into UDP-GlcNAc by the transfer of uridine 5-monophosphate (from uridine 5-triphosphate), a reaction catalyzed by the N-terminal domain. This Bifidobacterium adolescentis (strain ATCC 15703 / DSM 20083 / NCTC 11814 / E194a) protein is Bifunctional protein GlmU.